Here is a 478-residue protein sequence, read N- to C-terminus: MASTIKEALSVVSEDQSLFECAYGSPHLAKTEMTASSSSEYGQTSKMSPRVPQQDWLSQPPARVTIKMECNPNQVNGSRNSPDDCSVAKGGKMVSSSDNVGMNYGSYMEEKHIPPPNMTTNERRVIVPADPTLWSTDHVRQWLEWAVKEYGLPDVDILLFQNIDGKELCKMTKDDFQRLTPSYNADILLSHLHYLRETPLPHLTSDDVDKALQNSPRLMHARNTGGATFIFPNTSVYPEATQRITTRPDLPYEQARRSAWTSHSHPTQSKATQPSSSTVPKTEDQRPQLDPYQILGPTSSRLANPGSGQIQLWQFLLELLSDSSNSNCITWEGTNGEFKMTDPDEVARRWGERKSKPNMNYDKLSRALRYYYDKNIMTKVHGKRYAYKFDFHGIAQALQPHPPESSMYKYPSDLPYMSSYHAHPQKMNFVAPHPPALPVTSSSFFAAPNPYWNSPTGGIYPNTRLPAAHMPSHLGTYY.

Polar residues predominate over residues 34-47 (TASSSSEYGQTSKM). 2 disordered regions span residues 34–56 (TASS…QQDW) and 73–93 (NQVN…GGKM). One can recognise a PNT domain in the interval 113 to 199 (IPPPNMTTNE…SHLHYLRETP (87 aa)). A disordered region spans residues 242 to 303 (QRITTRPDLP…ILGPTSSRLA (62 aa)). The span at 259–280 (AWTSHSHPTQSKATQPSSSTVP) shows a compositional bias: polar residues. Residues 310–390 (IQLWQFLLEL…HGKRYAYKFD (81 aa)) constitute a DNA-binding region (ETS).

The protein belongs to the ETS family. In terms of tissue distribution, expressed in mesoderm- and, to a lesser extent, in ectoderm-derived tissues.

The protein localises to the nucleus. Acts as a transcriptional activator. The polypeptide is Transcriptional regulator Erg (ERG) (Gallus gallus (Chicken)).